A 342-amino-acid polypeptide reads, in one-letter code: Cell division protein ZipA (342 aa).

The Periplasmic segment spans residues 1–6 (MEDLQL). A helical membrane pass occupies residues 7-27 (VLFILGAIAIVAVLVHGFWSI). Topologically, residues 28 to 342 (RRQQPKSLKD…DYLHRIRANA (315 aa)) are cytoplasmic. The tract at residues 33 to 57 (KSLKDSPMGNFYKQQADKESPPKRV) is disordered. Positions 47 to 57 (QADKESPPKRV) are enriched in basic and acidic residues.

This sequence belongs to the ZipA family. In terms of assembly, interacts with FtsZ via their C-terminal domains.

The protein resides in the cell inner membrane. Functionally, essential cell division protein that stabilizes the FtsZ protofilaments by cross-linking them and that serves as a cytoplasmic membrane anchor for the Z ring. Also required for the recruitment to the septal ring of downstream cell division proteins. This is Cell division protein ZipA from Shewanella sp. (strain W3-18-1).